The following is a 207-amino-acid chain: Chloramphenicol acetyltransferase (207 aa).

The Proton acceptor role is filled by H186.

It belongs to the chloramphenicol acetyltransferase family. In terms of assembly, homotrimer.

It catalyses the reaction chloramphenicol + acetyl-CoA = chloramphenicol 3-acetate + CoA. Functionally, this enzyme is an effector of chloramphenicol resistance in bacteria. In Clostridium perfringens, this protein is Chloramphenicol acetyltransferase (catP).